Reading from the N-terminus, the 38-residue chain is Conotoxin FVIA (38 aa).

A propeptide spanning residues 1–12 is cleaved from the precursor; sequence ILSLSLLDRSTR. Cystine bridges form between cysteine 13–cysteine 28, cysteine 20–cysteine 32, and cysteine 27–cysteine 37. Cysteine 37 bears the Cysteine amide mark.

The protein belongs to the conotoxin O1 superfamily. As to expression, expressed by the venom duct.

Its subcellular location is the secreted. Its function is as follows. Omega-conotoxins act at presynaptic membranes, they bind and block voltage-gated calcium channels (Cav). This peptide reversibly and selectively inhibits Cav2.2/CACNA1B (IC(50)=11.5 nM) voltage-gated calcium channels. Channel time recovery after toxin exposure is short (about 50 seconds). In vivo, it effectively and dose-dependently reduces nociceptive behavior in the formalin test and in neuropathic pain models, and reduces mechanical and thermal allodynia in the tail nerve injury rat model. It also shows significant analgesic effects on writhing in mouse neurotransmitter- and cytokine-induced pain models, though it has no effect on acute thermal pain and interferon-gamma-induced pain. It also depresses blood pressure immediately after administration, but pressure recovers relatively quickly and completely. This chain is Conotoxin FVIA, found in Conus fulmen (Thunderbolt cone).